Consider the following 483-residue polypeptide: 23S rRNA (uracil(1939)-C(5))-methyltransferase RlmD (483 aa).

Over residues 1-11 the composition is skewed to basic residues; that stretch reads MTGLGKRRPAR. Residues 1 to 36 are disordered; sequence MTGLGKRRPARSRSGVSGLRERRQPASVERSAGSEG. Residues 29–90 enclose the TRAM domain; the sequence is ERSAGSEGRR…KRFDEAHVSE (62 aa). Residues Cys-103, Cys-109, Cys-112, and Cys-189 each contribute to the [4Fe-4S] cluster site. The S-adenosyl-L-methionine site is built by Gln-298, Phe-332, Asn-337, Glu-353, Asp-379, and Asp-401. The Nucleophile role is filled by Cys-427.

It belongs to the class I-like SAM-binding methyltransferase superfamily. RNA M5U methyltransferase family. RlmD subfamily.

The catalysed reaction is uridine(1939) in 23S rRNA + S-adenosyl-L-methionine = 5-methyluridine(1939) in 23S rRNA + S-adenosyl-L-homocysteine + H(+). In terms of biological role, catalyzes the formation of 5-methyl-uridine at position 1939 (m5U1939) in 23S rRNA. The protein is 23S rRNA (uracil(1939)-C(5))-methyltransferase RlmD of Halomonas elongata (strain ATCC 33173 / DSM 2581 / NBRC 15536 / NCIMB 2198 / 1H9).